A 130-amino-acid polypeptide reads, in one-letter code: Small ribosomal subunit protein uS8 (130 aa).

It belongs to the universal ribosomal protein uS8 family.

The chain is Small ribosomal subunit protein uS8 (RPS22A) from Eremothecium gossypii (strain ATCC 10895 / CBS 109.51 / FGSC 9923 / NRRL Y-1056) (Yeast).